Reading from the N-terminus, the 241-residue chain is Putative CRISPR-associated endoribonuclease-like protein Cas6 (241 aa).

Belongs to the CRISPR-associated protein Cas6/Cse3/CasE family. As to quaternary structure, binds crRNA.

In terms of biological role, CRISPR (clustered regularly interspaced short palindromic repeat), is an adaptive immune system that provides protection against mobile genetic elements (viruses, transposable elements and conjugative plasmids). CRISPR clusters contain sequences complementary to antecedent mobile elements and target invading nucleic acids. CRISPR clusters are transcribed and processed into CRISPR RNA (crRNA), also called psiRNA (prokaryotic silencing) in this organism (Potential). The polypeptide is Putative CRISPR-associated endoribonuclease-like protein Cas6 (cas6b) (Pyrococcus furiosus (strain ATCC 43587 / DSM 3638 / JCM 8422 / Vc1)).